Reading from the N-terminus, the 490-residue chain is Ketol-acid reductoisomerase (NADP(+)) (490 aa).

Positions 18–208 constitute a KARI N-terminal Rossmann domain; the sequence is AKCRFMDSSE…GGHKAGVLMS (191 aa). NADP(+) is bound by residues 45 to 48, Arg-68, Arg-76, Ser-78, and 108 to 110; these read CGAQ and DKQ. His-132 is an active-site residue. Gly-158 is an NADP(+) binding site. KARI C-terminal knotted domains follow at residues 209–344 and 345–486; these read SFIA…KTPA and GDVE…MADM. Asp-217, Glu-221, Glu-389, and Glu-393 together coordinate Mg(2+). Position 414 (Ser-414) interacts with substrate.

The protein belongs to the ketol-acid reductoisomerase family. Mg(2+) is required as a cofactor.

It catalyses the reaction (2R)-2,3-dihydroxy-3-methylbutanoate + NADP(+) = (2S)-2-acetolactate + NADPH + H(+). The enzyme catalyses (2R,3R)-2,3-dihydroxy-3-methylpentanoate + NADP(+) = (S)-2-ethyl-2-hydroxy-3-oxobutanoate + NADPH + H(+). It participates in amino-acid biosynthesis; L-isoleucine biosynthesis; L-isoleucine from 2-oxobutanoate: step 2/4. The protein operates within amino-acid biosynthesis; L-valine biosynthesis; L-valine from pyruvate: step 2/4. In terms of biological role, involved in the biosynthesis of branched-chain amino acids (BCAA). Catalyzes an alkyl-migration followed by a ketol-acid reduction of (S)-2-acetolactate (S2AL) to yield (R)-2,3-dihydroxy-isovalerate. In the isomerase reaction, S2AL is rearranged via a Mg-dependent methyl migration to produce 3-hydroxy-3-methyl-2-ketobutyrate (HMKB). In the reductase reaction, this 2-ketoacid undergoes a metal-dependent reduction by NADPH to yield (R)-2,3-dihydroxy-isovalerate. This is Ketol-acid reductoisomerase (NADP(+)) from Marinomonas sp. (strain MWYL1).